The chain runs to 49 residues: uncharacterized protein (49 aa).

This is an uncharacterized protein from Treponema pallidum (strain Nichols).